Here is a 254-residue protein sequence, read N- to C-terminus: Diphthine synthase (254 aa).

Residues Leu-11, Asp-87, Ile-90, 115 to 116, Leu-167, Leu-208, and His-233 each bind S-adenosyl-L-methionine; that span reads SV.

The protein belongs to the diphthine synthase family. In terms of assembly, homodimer.

The catalysed reaction is 2-[(3S)-amino-3-carboxypropyl]-L-histidyl-[translation elongation factor 2] + 3 S-adenosyl-L-methionine = diphthine-[translation elongation factor 2] + 3 S-adenosyl-L-homocysteine + 3 H(+). The protein operates within protein modification; peptidyl-diphthamide biosynthesis. Its function is as follows. S-adenosyl-L-methionine-dependent methyltransferase that catalyzes the trimethylation of the amino group of the modified target histidine residue in translation elongation factor 2 (EF-2), to form an intermediate called diphthine. The three successive methylation reactions represent the second step of diphthamide biosynthesis. The polypeptide is Diphthine synthase (Metallosphaera sedula (strain ATCC 51363 / DSM 5348 / JCM 9185 / NBRC 15509 / TH2)).